A 239-amino-acid polypeptide reads, in one-letter code: Lactate utilization protein A (239 aa).

The protein belongs to the LutA/YkgE family.

Is involved in L-lactate degradation and allows cells to grow with lactate as the sole carbon source. The polypeptide is Lactate utilization protein A (Bacillus cereus (strain G9842)).